Reading from the N-terminus, the 565-residue chain is E3 ubiquitin-protein ligase ipaH7.8 (565 aa).

Residues 1–22 (MFSVNNTHSSVSCSPSINSNST) are disordered. The segment at 1–262 (MFSVNNTHSS…YHGPQIYFSM (262 aa)) is interaction with target proteins. A compositionally biased stretch (low complexity) spans 9–22 (SSVSCSPSINSNST). LRR repeat units follow at residues 58–79 (QEAV…PKHI), 80–97 (SALI…KLPA), 98–119 (FLKE…PESL), 120–137 (TTLS…VLPN), 138–157 (HLTS…ALPE), 158–179 (KLKF…PDKL), 180–199 (EILC…SDRN), 202–223 (RQKE…FSQL), and 225–248 (SSYR…QRLT). Residues 263 to 270 (SDGQQNTL) are linker. The tract at residues 271-565 (HRPLADAVTA…SENGSRLHHS (295 aa)) is E3 ubiquitin-protein ligase catalytic domain. The 293-residue stretch at 273–565 (PLADAVTAWF…SENGSRLHHS (293 aa)) folds into the NEL domain. Catalysis depends on C357, which acts as the Glycyl thioester intermediate.

This sequence belongs to the LRR-containing bacterial E3 ligase family. In terms of processing, ubiquitinated in the presence of host E1 ubiquitin-activating enzyme, E2 ubiquitin-conjugating enzyme and ubiquitin.

Its subcellular location is the secreted. It is found in the host cytoplasm. The catalysed reaction is S-ubiquitinyl-[E2 ubiquitin-conjugating enzyme]-L-cysteine + [acceptor protein]-L-lysine = [E2 ubiquitin-conjugating enzyme]-L-cysteine + N(6)-ubiquitinyl-[acceptor protein]-L-lysine.. It participates in protein modification; protein ubiquitination. Its function is as follows. E3 ubiquitin ligase effector protein that interferes with host's innate immunity. Functions to alter host cell physiology and promote bacterial survival in host tissues. Catalyzes ubiquitination of human gasdermins GSDMB and GSDMD, promoting their degradation by the proteasome, thereby preventing cell death. In contrast, activates host cell pyroptosis in mouse cells: catalyzes ubiquitination of mouse Nlrp1b allele 1 protein, releasing the cleaved C-terminal part of Nlrp1b, which polymerizes and forms the Nlrp1b inflammasome followed by host cell pyroptosis. Does not catalyze ubiquitination of mouse GSDMD. This chain is E3 ubiquitin-protein ligase ipaH7.8, found in Shigella flexneri.